The following is a 532-amino-acid chain: Telomerase Cajal body protein 1 (532 aa).

A disordered region spans residues 1-48 (MKTSEELRLAPDSLPSDLVPAPVLQASPADKNTDSEPVPPPCGGDDQL). Phosphoserine is present on residues serine 27, serine 61, and serine 83. The interval 83–115 (SPRIEEQEVPENASLPVEETNRPELESGEAMEG) is disordered. 6 WD repeats span residues 151 to 190 (RSEN…YSES), 206 to 251 (EGDT…LRAS), 256 to 297 (NHLD…RDCE), 307 to 348 (GQSG…ALLG), 349 to 389 (GHQG…HLLW), and 395 to 434 (VTTN…SDCK). At threonine 474 the chain carries Phosphothreonine. Serine 476 is subject to Phosphoserine. A disordered region spans residues 505–532 (CGGGPDPSNPDEDQDEKGQGRTEAVGMS).

It belongs to the TCAB1 family. As to quaternary structure, component of the telomerase holoenzyme complex composed of one molecule of TERT, one molecule of WRAP53/TCAB1, two molecules of H/ACA ribonucleoprotein complex subunits DKC1, NOP10, NHP2 and GAR1, and a telomerase RNA template component (TERC). The telomerase holoenzyme complex is associated with TEP1, SMG6/EST1A and POT1. Interacts with the chaperonin-containing T-complex (TRiC) complex; which mediates the folding of WRAP53/TCAB1. Interacts with COIL. Interacts with SMN1. Interacts with RNF8. Interacts with histone H2AX. Post-translationally, phosphorylated at Ser-61 by ATM in response to DNA damage, promoting its interaction with histone H2AX and localization to sites of DNA double-strand breaks.

Its subcellular location is the nucleus. The protein localises to the cajal body. The protein resides in the chromosome. It localises to the telomere. In terms of biological role, RNA chaperone that plays a key role in telomere maintenance and RNA localization to Cajal bodies. Specifically recognizes and binds the Cajal body box (CAB box) present in both small Cajal body RNAs (scaRNAs) and telomerase RNA template component (TERC). Essential component of the telomerase holoenzyme complex, a ribonucleoprotein complex essential for the replication of chromosome termini that elongates telomeres in most eukaryotes. In the telomerase holoenzyme complex, required to stimulate the catalytic activity of the complex. Acts by specifically binding the CAB box of the TERC RNA and controlling the folding of the CR4/CR5 region of the TERC RNA, a critical step for telomerase activity. In addition, also controls telomerase holoenzyme complex localization to Cajal body. During S phase, required for delivery of TERC to telomeres during S phase and for telomerase activity. In addition to its role in telomere maintenance, also required for Cajal body formation, probably by mediating localization of scaRNAs to Cajal bodies. Also plays a role in DNA repair: phosphorylated by ATM in response to DNA damage and relocalizes to sites of DNA double-strand breaks to promote the repair of DNA double-strand breaks. Acts by recruiting the ubiquitin ligase RNF8 to DNA breaks and promote both homologous recombination (HR) and non-homologous end joining (NHEJ). The chain is Telomerase Cajal body protein 1 from Rattus norvegicus (Rat).